The sequence spans 435 residues: Enolase (435 aa).

Q163 contacts (2R)-2-phosphoglycerate. E205 (proton donor) is an active-site residue. Mg(2+)-binding residues include D243, E292, and D319. The (2R)-2-phosphoglycerate site is built by K344, R373, S374, and K395. K344 serves as the catalytic Proton acceptor.

This sequence belongs to the enolase family. As to quaternary structure, homooctamer, a tetramer of homodimers. The cofactor is Mg(2+).

It localises to the cytoplasm. It is found in the secreted. The protein resides in the cell surface. The protein localises to the cell wall. The catalysed reaction is (2R)-2-phosphoglycerate = phosphoenolpyruvate + H2O. Its pathway is carbohydrate degradation; glycolysis; pyruvate from D-glyceraldehyde 3-phosphate: step 4/5. Functionally, catalyzes the reversible conversion of 2-phosphoglycerate (2-PG) into phosphoenolpyruvate (PEP). It is essential for the degradation of carbohydrates via glycolysis. 'Moonlights' as a plasminogen receptor. Binds plasminogen and more weakly plasmin when expressed on the bacterial cell surface; probably has more than one plasmin(ogen) binding site, may bind via Lys residues. Plasminogen binding potentially allows the bacterium to acquire surface-associated proteolytic activity, which in turn contributes to tissue invasion and virulence. The protein is Enolase of Streptococcus pyogenes serotype M6 (strain ATCC BAA-946 / MGAS10394).